The following is a 359-amino-acid chain: Peptide chain release factor 1 (359 aa).

The residue at position 235 (glutamine 235) is an N5-methylglutamine. Residues 282–307 (RQRADSERSADRKSQVGSGDRSERIR) are compositionally biased toward basic and acidic residues. Residues 282-309 (RQRADSERSADRKSQVGSGDRSERIRTY) form a disordered region.

The protein belongs to the prokaryotic/mitochondrial release factor family. Methylated by PrmC. Methylation increases the termination efficiency of RF1.

It localises to the cytoplasm. In terms of biological role, peptide chain release factor 1 directs the termination of translation in response to the peptide chain termination codons UAG and UAA. This chain is Peptide chain release factor 1, found in Allorhizobium ampelinum (strain ATCC BAA-846 / DSM 112012 / S4) (Agrobacterium vitis (strain S4)).